We begin with the raw amino-acid sequence, 380 residues long: Transcription factor SOX-7 (380 aa).

The disordered stretch occupies residues 24 to 43 (SDGLSPPAVPRPSGDKSSES). Positions 45 to 113 (IRRPMNAFMV…QHMQDYPNYK (69 aa)) form a DNA-binding region, HMG box. The interval 139–167 (SRDQNTLPEKNGIGRGEKEDRGEYSPGAT) is disordered. The region spanning 260–380 (VSMMSSVSGC…ATYYNSYSVS (121 aa)) is the Sox C-terminal domain. The tract at residues 323–328 (EFDQYL) is required for beta-catenin-binding.

In terms of assembly, interacts with CTNNB1/beta-catenin; this interaction may lead to the proteasomal degradation of active CTNNB1 and thus inhibition of Wnt/beta-catenin-stimulated transcription. As to expression, predominantly expressed in ovary, lung and heart. In the ovary, restricted to oocytes (at protein level). Present both in mesenchymal and epithelial cells in some adult tissues, including ear.

The protein resides in the nucleus. The protein localises to the cytoplasm. In terms of biological role, binds to and activates the CDH5 promoter, hence plays a role in the transcriptional regulation of genes expressed in the hemogenic endothelium and blocks further differentiation into blood precursors. May be required for the survival of both hematopoietic and endothelial precursors during specification. May play a role in skeletal myogenesis and up-regulate the expression of muscle markers, such as PAX3/PAX7 and Meox1. Competes with GATA4 for binding and activation of the FGF3 promoter. Represses Wnt/beta-catenin-stimulated transcription. Probably acts by targeting CTNNB1 to proteasomal degradation. Binds the DNA sequence 5'-AACAAT-3'. This Mus musculus (Mouse) protein is Transcription factor SOX-7 (Sox7).